Reading from the N-terminus, the 333-residue chain is Small ribosomal subunit protein uS2 (333 aa).

Belongs to the universal ribosomal protein uS2 family.

The polypeptide is Small ribosomal subunit protein uS2 (Azorhizobium caulinodans (strain ATCC 43989 / DSM 5975 / JCM 20966 / LMG 6465 / NBRC 14845 / NCIMB 13405 / ORS 571)).